The following is a 605-amino-acid chain: Endonuclease 8-like 3 (605 aa).

Catalysis depends on valine 2, which acts as the Schiff-base intermediate with DNA; via amino nitrogen. DNA-binding residues include asparagine 192 and arginine 271. Residues 247–281 form an FPG-type zinc finger; that stretch reads KVYKRPNCGQCHCRITVCRFGDNNRMTYFCPHCQK. The segment at 317-346 adopts a RanBP2-type zinc-finger fold; the sequence is SEEHWTCVVCTLINKPSSKACDACLTSRPI. Serine 450 carries the phosphoserine modification. A disordered region spans residues 456–477; the sequence is ESKLFSPAHKKPKTAQYSSPEL. Zn(2+) contacts are provided by cysteine 507, histidine 510, cysteine 533, cysteine 541, cysteine 554, histidine 556, cysteine 579, and cysteine 587. GRF-type zinc fingers lie at residues 507 to 550 and 554 to 596; these read CSKH…ADLS and CNHG…AENG.

Belongs to the FPG family. As to expression, expressed in keratinocytes and embryonic fibroblasts (at protein level). Also detected in thymus, testis and fetal lung primary fibroblasts.

The protein resides in the nucleus. It is found in the chromosome. It catalyses the reaction 2'-deoxyribonucleotide-(2'-deoxyribose 5'-phosphate)-2'-deoxyribonucleotide-DNA = a 3'-end 2'-deoxyribonucleotide-(2,3-dehydro-2,3-deoxyribose 5'-phosphate)-DNA + a 5'-end 5'-phospho-2'-deoxyribonucleoside-DNA + H(+). In terms of biological role, DNA glycosylase which prefers single-stranded DNA (ssDNA), or partially ssDNA structures such as bubble and fork structures, to double-stranded DNA (dsDNA). Mediates interstrand cross-link repair in response to replication stress: acts by mediating DNA glycosylase activity, cleaving one of the two N-glycosyl bonds comprising the interstrand cross-link, which avoids the formation of a double-strand break but generates an abasic site that is bypassed by translesion synthesis polymerases. In vitro, displays strong glycosylase activity towards the hydantoin lesions spiroiminodihydantoin (Sp) and guanidinohydantoin (Gh) in both ssDNA and dsDNA; also recognizes FapyA, FapyG, 5-OHU, 5-OHC, 5-OHMH, Tg and 8-oxoA lesions in ssDNA. No activity on 8-oxoG detected. Also shows weak DNA-(apurinic or apyrimidinic site) lyase activity. In vivo, appears to be the primary enzyme involved in removing Sp and Gh from ssDNA in neonatal tissues. The chain is Endonuclease 8-like 3 (NEIL3) from Homo sapiens (Human).